The chain runs to 296 residues: Transmembrane O-methyltransferase (296 aa).

Residues 36–56 traverse the membrane as a helical segment; the sequence is VGTMSPAIALAFLPLVVTLLV. S-adenosyl-L-methionine-binding positions include glutamate 142, 144-145, serine 150, glutamate 168, and serine 198; that span reads GT.

This sequence belongs to the class I-like SAM-binding methyltransferase superfamily. Cation-dependent O-methyltransferase family. Interacts with LHFPL5, PCDH15, TMC1, TMC2 and TMIE. Interacts directly with TMC1. The interaction of TOMT with TMC1 and TMC2 is required for the transportation of TMC1/2 into the stereocilia of hair cells.

It localises to the membrane. Its subcellular location is the cytoplasm. The protein localises to the endoplasmic reticulum. It catalyses the reaction a catechol + S-adenosyl-L-methionine = a guaiacol + S-adenosyl-L-homocysteine + H(+). Its function is as follows. Catalyzes the O-methylation, and thereby the inactivation, of catecholamine neurotransmitters and catechol hormones. Required for auditory function. Component of the cochlear hair cell's mechanotransduction (MET) machinery. Involved in the assembly of the asymmetric tip-link MET complex. Required for transportation of TMC1 and TMC2 proteins into the mechanically sensitive stereocilia of the hair cells. The function in MET is independent of the enzymatic activity. In Macaca mulatta (Rhesus macaque), this protein is Transmembrane O-methyltransferase.